A 70-amino-acid polypeptide reads, in one-letter code: UPF0426 protein ssl0294 (70 aa).

It belongs to the UPF0426 family.

The protein is UPF0426 protein ssl0294 of Synechocystis sp. (strain ATCC 27184 / PCC 6803 / Kazusa).